We begin with the raw amino-acid sequence, 211 residues long: Large ribosomal subunit protein uL4 (211 aa).

Residues 52 to 79 (GRAEVHGSNSKPYSQKGTGRARRGDKKS) are disordered. Over residues 58–68 (GSNSKPYSQKG) the composition is skewed to polar residues.

It belongs to the universal ribosomal protein uL4 family. In terms of assembly, part of the 50S ribosomal subunit.

One of the primary rRNA binding proteins, this protein initially binds near the 5'-end of the 23S rRNA. It is important during the early stages of 50S assembly. It makes multiple contacts with different domains of the 23S rRNA in the assembled 50S subunit and ribosome. In terms of biological role, forms part of the polypeptide exit tunnel. This chain is Large ribosomal subunit protein uL4, found in Treponema denticola (strain ATCC 35405 / DSM 14222 / CIP 103919 / JCM 8153 / KCTC 15104).